The sequence spans 160 residues: Cytochrome b6-f complex subunit 4 (160 aa).

The next 3 helical transmembrane spans lie at 36 to 56, 95 to 115, and 131 to 151; these read LLYV…ALAV, LLGV…PFIE, and TVFL…ALPL.

Belongs to the cytochrome b family. PetD subfamily. As to quaternary structure, the 4 large subunits of the cytochrome b6-f complex are cytochrome b6, subunit IV (17 kDa polypeptide, PetD), cytochrome f and the Rieske protein, while the 4 small subunits are PetG, PetL, PetM and PetN. The complex functions as a dimer.

The protein localises to the cellular thylakoid membrane. In terms of biological role, component of the cytochrome b6-f complex, which mediates electron transfer between photosystem II (PSII) and photosystem I (PSI), cyclic electron flow around PSI, and state transitions. This chain is Cytochrome b6-f complex subunit 4, found in Desmonostoc sp. (strain PCC 7906) (Nostoc sp. (strain PCC 7906)).